The chain runs to 376 residues: Deoxyguanosinetriphosphate triphosphohydrolase-like protein (376 aa).

Residues 1-32 (MEPSFAPYAAHSSQTRGRVHREAPAAPRSEFQ) form a disordered region. Residues 65-196 (RLTHSIEVAQ…ANLADEIAYN (132 aa)) form the HD domain.

Belongs to the dGTPase family. Type 2 subfamily.

The chain is Deoxyguanosinetriphosphate triphosphohydrolase-like protein from Thiobacillus denitrificans (strain ATCC 25259 / T1).